The sequence spans 401 residues: S-adenosylmethionine synthase (401 aa).

Residue 135-140 participates in ATP binding; that stretch reads GHGSGD.

It belongs to the AdoMet synthase 2 family. It depends on Mg(2+) as a cofactor.

It catalyses the reaction L-methionine + ATP + H2O = S-adenosyl-L-methionine + phosphate + diphosphate. It participates in amino-acid biosynthesis; S-adenosyl-L-methionine biosynthesis; S-adenosyl-L-methionine from L-methionine: step 1/1. In terms of biological role, catalyzes the formation of S-adenosylmethionine from methionine and ATP. The sequence is that of S-adenosylmethionine synthase (mat) from Methanothermobacter marburgensis (strain ATCC BAA-927 / DSM 2133 / JCM 14651 / NBRC 100331 / OCM 82 / Marburg) (Methanobacterium thermoautotrophicum).